A 313-amino-acid polypeptide reads, in one-letter code: Ribosomal RNA small subunit methyltransferase H (313 aa).

Residues 35 to 37 (GGH), Asp55, Phe79, Asp101, and Gln108 each bind S-adenosyl-L-methionine.

The protein belongs to the methyltransferase superfamily. RsmH family.

Its subcellular location is the cytoplasm. The catalysed reaction is cytidine(1402) in 16S rRNA + S-adenosyl-L-methionine = N(4)-methylcytidine(1402) in 16S rRNA + S-adenosyl-L-homocysteine + H(+). In terms of biological role, specifically methylates the N4 position of cytidine in position 1402 (C1402) of 16S rRNA. The polypeptide is Ribosomal RNA small subunit methyltransferase H (Edwardsiella ictaluri (strain 93-146)).